We begin with the raw amino-acid sequence, 447 residues long: GTPase Der (447 aa).

2 EngA-type G domains span residues 4–165 (QIIT…PEEE) and 180–357 (LQIV…KIWN). Residues 10–17 (GRPNVGKS), 57–61 (DTPGL), 119–122 (NKCE), 186–193 (GRPNAGKS), 233–237 (DTAGL), and 298–301 (NKWD) each bind GTP. The region spanning 358–443 (KKITTSKLNE…PIRFIYVKTK (86 aa)) is the KH-like domain.

The protein belongs to the TRAFAC class TrmE-Era-EngA-EngB-Septin-like GTPase superfamily. EngA (Der) GTPase family. Associates with the 50S ribosomal subunit.

Functionally, GTPase that plays an essential role in the late steps of ribosome biogenesis. In Rickettsia africae (strain ESF-5), this protein is GTPase Der.